A 66-amino-acid polypeptide reads, in one-letter code: MKTSALFVIFGLVLLFCNSFAAELKTTGRGCGGLMAGCDGKSTFCCSGYNCSPTWKWCVYARPGRR.

Positions 1-21 are cleaved as a signal peptide; that stretch reads MKTSALFVIFGLVLLFCNSFA. Positions 22–29 are excised as a propeptide; that stretch reads AELKTTGR. 3 disulfides stabilise this stretch: cysteine 31-cysteine 46, cysteine 38-cysteine 51, and cysteine 45-cysteine 58. Proline amide is present on proline 63.

Belongs to the neurotoxin 10 (Hwtx-1) family. 46 (Jztx-7/10/12) subfamily. Expressed by the venom gland.

Its subcellular location is the secreted. In terms of biological role, probable ion channel inhibitor. The chain is U1-theraphotoxin-Cg1a 1 from Chilobrachys guangxiensis (Chinese earth tiger tarantula).